Consider the following 874-residue polypeptide: Probable cation-transporting P-type ATPase (874 aa).

The Cytoplasmic segment spans residues 1 to 41 (MNSWTGLSEQAAIKSRQEHGANFLPEKKATPFWLLFLQQFK). Residues 42-62 (SLVVILLLLASLLSFVVAIVS) form a helical membrane-spanning segment. The Extracellular portion of the chain corresponds to 63 to 79 (GLRSNWNFNHDLIIEWV). The chain crosses the membrane as a helical span at residues 80–100 (QPFIILLTVFANSLIGSIQEF). The Cytoplasmic portion of the chain corresponds to 101–237 (KAQKSASALK…TKLSPLQQKL (137 aa)). A helical transmembrane segment spans residues 238–257 (EKIGKWFSWFGLGLFAVVFL). Topologically, residues 258 to 275 (VQTALLGFDNFTNNWSIA) are extracellular. The chain crosses the membrane as a helical span at residues 276–293 (LIGAIALVVAIIPEGLVT). The Cytoplasmic segment spans residues 294–644 (FINVIFALSV…EEGRKTFLTC (351 aa)). D331 (4-aspartylphosphate intermediate) is an active-site residue. Mg(2+) is bound by residues D589 and D593. Residues 645-664 (KRVLLNLFLTSIAGTVVVLL) traverse the membrane as a helical segment. Topologically, residues 665–687 (GLFILGQVFKTNLLQQGHDFQVF) are extracellular. Residues 688–708 (SPTQLLIINLFVHGFPAVALA) traverse the membrane as a helical segment. The Cytoplasmic portion of the chain corresponds to 709-726 (VQPVKEKLMVGSFSTKNL). The chain crosses the membrane as a helical span at residues 727–749 (FYNRQGFDLIWQSLFLSFLTLLF). Over 750–770 (YSLGIIYAINNRDLQTSGDLI) the chain is Extracellular. A helical membrane pass occupies residues 771–790 (NRAGSTCGFFILGASAALNS). The Cytoplasmic portion of the chain corresponds to 791-803 (LNLMVDKPLLMTN). Residues 804–826 (PWFFKLVWIGSLASILVFLLIIF) form a helical membrane-spanning segment. The Extracellular portion of the chain corresponds to 827–844 (INPLGLVFNVLQDLTNHP). A helical transmembrane segment spans residues 845-865 (VLISYSFGGVILYMGMNEVVK). Over 866–874 (LIRLGYGNI) the chain is Cytoplasmic.

The protein belongs to the cation transport ATPase (P-type) (TC 3.A.3) family. Type II subfamily.

It localises to the cell membrane. The catalysed reaction is ATP + H2O = ADP + phosphate + H(+). Its function is as follows. Could mediate calcium influx. The chain is Probable cation-transporting P-type ATPase (pacL) from Mycoplasma genitalium (strain ATCC 33530 / DSM 19775 / NCTC 10195 / G37) (Mycoplasmoides genitalium).